A 299-amino-acid chain; its full sequence is Putative S-adenosyl-L-methionine-dependent methyltransferase MAB_0027c (299 aa).

S-adenosyl-L-methionine-binding positions include Asp-126 and 155–156 (DL).

This sequence belongs to the UPF0677 family.

Its function is as follows. Exhibits S-adenosyl-L-methionine-dependent methyltransferase activity. This chain is Putative S-adenosyl-L-methionine-dependent methyltransferase MAB_0027c, found in Mycobacteroides abscessus (strain ATCC 19977 / DSM 44196 / CCUG 20993 / CIP 104536 / JCM 13569 / NCTC 13031 / TMC 1543 / L948) (Mycobacterium abscessus).